The following is a 451-amino-acid chain: Chromosomal replication initiator protein DnaA (451 aa).

A domain I, interacts with DnaA modulators region spans residues 1–71; the sequence is MSEKEIWDKV…QAIIYDVIGY (71 aa). The interval 71 to 112 is domain II; it reads YEVKPHFISEDELASYNNVNTQEVQEPQVQHSSIDDKTWGKE. The segment at 113 to 329 is domain III, AAA+ region; it reads QFNMHNTFDT…GALTRLLAYS (217 aa). The ATP site is built by G157, G159, K160, and T161. A domain IV, binds dsDNA region spans residues 330 to 451; that stretch reads KLQGKPITTE…ENLEKEIRNQ (122 aa).

This sequence belongs to the DnaA family. In terms of assembly, oligomerizes as a right-handed, spiral filament on DNA at oriC.

The protein resides in the cytoplasm. Functionally, plays an essential role in the initiation and regulation of chromosomal replication. ATP-DnaA binds to the origin of replication (oriC) to initiate formation of the DNA replication initiation complex once per cell cycle. Binds the DnaA box (a 9 base pair repeat at the origin) and separates the double-stranded (ds)DNA. Forms a right-handed helical filament on oriC DNA; dsDNA binds to the exterior of the filament while single-stranded (ss)DNA is stabiized in the filament's interior. The ATP-DnaA-oriC complex binds and stabilizes one strand of the AT-rich DNA unwinding element (DUE), permitting loading of DNA polymerase. After initiation quickly degrades to an ADP-DnaA complex that is not apt for DNA replication. Binds acidic phospholipids. The sequence is that of Chromosomal replication initiator protein DnaA from Staphylococcus epidermidis (strain ATCC 35984 / DSM 28319 / BCRC 17069 / CCUG 31568 / BM 3577 / RP62A).